A 132-amino-acid chain; its full sequence is S-adenosylmethionine decarboxylase proenzyme (132 aa).

Residue Ser65 is the Schiff-base intermediate with substrate; via pyruvic acid of the active site. Ser65 is subject to Pyruvic acid (Ser); by autocatalysis. His70 (proton acceptor; for processing activity) is an active-site residue. The active-site Proton donor; for catalytic activity is the Cys85.

It belongs to the prokaryotic AdoMetDC family. Type 1 subfamily. As to quaternary structure, heterotetramer of two alpha and two beta chains arranged as a dimer of alpha/beta heterodimers. Requires pyruvate as cofactor. In terms of processing, is synthesized initially as an inactive proenzyme. Formation of the active enzyme involves a self-maturation process in which the active site pyruvoyl group is generated from an internal serine residue via an autocatalytic post-translational modification. Two non-identical subunits are generated from the proenzyme in this reaction, and the pyruvate is formed at the N-terminus of the alpha chain, which is derived from the carboxyl end of the proenzyme. The post-translation cleavage follows an unusual pathway, termed non-hydrolytic serinolysis, in which the side chain hydroxyl group of the serine supplies its oxygen atom to form the C-terminus of the beta chain, while the remainder of the serine residue undergoes an oxidative deamination to produce ammonia and the pyruvoyl group blocking the N-terminus of the alpha chain.

The enzyme catalyses S-adenosyl-L-methionine + H(+) = S-adenosyl 3-(methylsulfanyl)propylamine + CO2. The protein operates within amine and polyamine biosynthesis; S-adenosylmethioninamine biosynthesis; S-adenosylmethioninamine from S-adenosyl-L-methionine: step 1/1. Catalyzes the decarboxylation of S-adenosylmethionine to S-adenosylmethioninamine (dcAdoMet), the propylamine donor required for the synthesis of the polyamines spermine and spermidine from the diamine putrescine. The polypeptide is S-adenosylmethionine decarboxylase proenzyme (Symbiobacterium thermophilum (strain DSM 24528 / JCM 14929 / IAM 14863 / T)).